The chain runs to 418 residues: Phosphatidylcholine:ceramide cholinephosphotransferase 1 (418 aa).

One can recognise an SAM domain in the interval 12–75 (WSPKKVADWL…LDMIETLKME (64 aa)). Position 13 is a phosphoserine (S13). The next 5 membrane-spanning stretches (helical) occupy residues 141–161 (FLAF…ISVV), 189–209 (FSIC…QWLL), 220–240 (FFCI…VTTL), 281–301 (MCGD…YLFI), and 309–329 (LWWY…CILL). H290 is an active-site residue. Catalysis depends on residues H333 and D337. The helical transmembrane segment at 335–352 (TVDVVVAYYITTRLFWWY) threads the bilayer.

It belongs to the sphingomyelin synthase family. In terms of tissue distribution, widely expressed. Highest expression in the cardiovascular system.

It localises to the golgi apparatus membrane. It catalyses the reaction an N-acylsphing-4-enine + a 1,2-diacyl-sn-glycero-3-phosphocholine = a sphingomyelin + a 1,2-diacyl-sn-glycerol. The enzyme catalyses 1-(9Z-octadecenoyl)-2-acyl-sn-3-glycerol + a sphingomyelin = a 1-(9Z-octadecenoyl)-2-acyl-sn-glycero-3-phosphocholine + an N-acylsphing-4-enine. It carries out the reaction N-hexadecanoylsphinganine + a 1,2-diacyl-sn-glycero-3-phosphocholine = N-hexadecanoyl-sphinganine-1-phosphocholine + a 1,2-diacyl-sn-glycerol. The catalysed reaction is N-hexadecanoyl-(4R)-hydroxysphinganine + a 1,2-diacyl-sn-glycero-3-phosphocholine = N-hexadecanoyl-(4R)-hydroxysphinganine-phosphocholine + a 1,2-diacyl-sn-glycerol. It catalyses the reaction an N-acylsphing-4-enine + a 1,2-diacyl-sn-glycero-3-phosphoethanolamine = an N-acylsphing-4-enine 1-phosphoethanolamine + a 1,2-diacyl-sn-glycerol. The protein operates within sphingolipid metabolism. In terms of biological role, major sphingomyelin synthase at the Golgi apparatus. Catalyzes the reversible transfer of phosphocholine moiety in sphingomyelin biosynthesis: in the forward reaction transfers phosphocholine head group of phosphatidylcholine (PC) on to ceramide (CER) to form ceramide phosphocholine (sphingomyelin, SM) and diacylglycerol (DAG) as by-product, and in the reverse reaction transfers phosphocholine from SM to DAG to form PC and CER. The direction of the reaction depends on the levels of CER and DAG in Golgi membranes. Converts the newly synthesized CER, that is transported from the endoplasmic reticulum to the trans-Golgi by the Cer transport protein (CERT), to SM. Can form a heteromeric complex with glucosylceramide synthase (GCS) increasing SMS activity and reducing glucosylceramide synthesis, a critical mechanism that controls the metabolic fate of CER in the Golgi. Does not use free phosphorylcholine or CDP-choline as donor. Can also transfer phosphoethanolamine head group of phosphatidylethanolamine (PE) on to CER to form ceramide phosphoethanolamine (CPE). Regulates receptor-mediated signal transduction via mitogenic DAG and proapoptotic CER, as well as via SM, a structural component of membrane rafts that serve as platforms for signal transduction and protein sorting. Plays a role in secretory transport via regulation of DAG pool at the Golgi apparatus and its downstream effects on PRKD1. In Sus scrofa (Pig), this protein is Phosphatidylcholine:ceramide cholinephosphotransferase 1 (SGMS1).